Reading from the N-terminus, the 377-residue chain is Transcription factor ast-1 (377 aa).

The interval 72 to 143 (PNRMLYNDNT…SNGSSSSTES (72 aa)) is disordered. Low complexity-rich tracts occupy residues 96 to 109 (STSA…TSSK) and 118 to 142 (TESS…SSTE). A DNA-binding region (ETS) is located at residues 214–294 (TQLWQFLLEL…HGKRYAYKFD (81 aa)).

This sequence belongs to the ETS family. In terms of tissue distribution, expressed in the A-neurons in the male-specific genital sensilla (simple sense organs) known as rays.

It localises to the nucleus. The protein localises to the cell projection. The protein resides in the neuron projection. Its function is as follows. Transcription factor. Probably binds to DNA sequences containing the consensus motif 5'-CGGA[AT][AG]-3'. Positively modulates expression of dopamine pathway genes, acting as a terminal selector for differentiation of dopaminergic neurons; may act in concert with homeobox proteins ceh-40, ceh-43 and ceh-20. Required for axon navigation in some interneurons, perhaps acting in the same pathways as basement membrane protein nid-1 and unc-6/netrin. Plays a role in the differentiation of the ventral cord pioneer neuron AVG. Required for morphogenesis of the pharynx. This chain is Transcription factor ast-1, found in Caenorhabditis elegans.